Consider the following 314-residue polypeptide: Glycerol-1-phosphate dehydrogenase [NAD(P)+] (314 aa).

Residues 52-56 and 74-77 contribute to the NAD(+) site; these read GKPLD and TSAS. A substrate-binding site is contributed by D79. S83 provides a ligand contact to NAD(+). D131 contacts substrate. Positions 131 and 211 each coordinate Zn(2+). Residue H215 participates in substrate binding. H231 is a binding site for Zn(2+).

Belongs to the glycerol-1-phosphate dehydrogenase family. The cofactor is Zn(2+).

It localises to the cytoplasm. It carries out the reaction sn-glycerol 1-phosphate + NAD(+) = dihydroxyacetone phosphate + NADH + H(+). The enzyme catalyses sn-glycerol 1-phosphate + NADP(+) = dihydroxyacetone phosphate + NADPH + H(+). It participates in membrane lipid metabolism; glycerophospholipid metabolism. In terms of biological role, catalyzes the NAD(P)H-dependent reduction of dihydroxyacetonephosphate (DHAP or glycerone phosphate) to glycerol 1-phosphate (G1P). The G1P thus generated is used as the glycerophosphate backbone of phospholipids in the cellular membranes of Archaea. The protein is Glycerol-1-phosphate dehydrogenase [NAD(P)+] of Korarchaeum cryptofilum (strain OPF8).